Here is a 382-residue protein sequence, read N- to C-terminus: Protein PEP-RELATED DEVELOPMENT ARRESTED 1 homolog, chloroplastic (382 aa).

The N-terminal 44 residues, 1–44, are a transit peptide targeting the chloroplast; the sequence is MAILPLSISHSLTSALSATSSGIGRPVARLLHPRVPSRPTVICL.

Its subcellular location is the plastid. The protein resides in the chloroplast stroma. It is found in the chloroplast nucleoid. Functionally, plays an essential role in early steps of chloroplast development. May be involved in the redox control of plastid gene expression by maintening the redox state around chloroplast nucleoids. May positively regulate plastid-encoded RNA polymerase (PEP) activity. This Oryza sativa subsp. japonica (Rice) protein is Protein PEP-RELATED DEVELOPMENT ARRESTED 1 homolog, chloroplastic.